The chain runs to 589 residues: Putative ABC transporter ATP-binding protein MG015 (589 aa).

6 consecutive transmembrane segments (helical) span residues Leu9–Leu29, Leu66–Ala86, Leu161–Ile181, Ile251–Ile271, Ile280–Leu300, and Ile303–Ser323. The ABC transmembrane type-1 domain maps to Leu9–Leu319. Residues Ile352–Ser586 enclose the ABC transporter domain. Residue Gly385–Ser392 coordinates ATP.

Belongs to the ABC transporter superfamily.

The protein resides in the cell membrane. This chain is Putative ABC transporter ATP-binding protein MG015, found in Mycoplasma genitalium (strain ATCC 33530 / DSM 19775 / NCTC 10195 / G37) (Mycoplasmoides genitalium).